The following is an 83-amino-acid chain: Large ribosomal subunit protein bL31 (83 aa).

It belongs to the bacterial ribosomal protein bL31 family. Type A subfamily. Part of the 50S ribosomal subunit.

Binds the 23S rRNA. The protein is Large ribosomal subunit protein bL31 of Gloeothece citriformis (strain PCC 7424) (Cyanothece sp. (strain PCC 7424)).